The chain runs to 479 residues: MKGLFIRIVLAICLSLWAIDMVFPWQQIVRSKQNYHTTIQERQKLIVGTINNPVSYFIGTNGETGLEYELSKAFANYLNVDLEMFPLNSADALFQALAQGKIDIAAASLFYQQDRSEKFKLGPAYHAASWQLTYRKGERRPITLENLSGKLVIPANSALNNILLAKKEKYPSLTWETSELSQEELLFQVAEGKIDYTIATSTEVSVNQQIKPQIAIAFNVTDEFTVHWYLSDKGASELQAALLDFMNSAIENGLIARIEEKYFNHLNQFDYVDTRSYLNAIETVLPKYAPLFEKYKGDLDWHLLAAISYQESHWNPEATSPTGVRGMMMLTKATADRMNITNRLDPEQSIKAGSEYLHLLLKQMPDTILKEDRIWFALAAYNMGLGHLLDVRRLTKQLGGNPDNWLEVKKNLPLLAQKRYFTHLKYGYARGYEAFQYVENIRRYMNSIMNYYRLQQNQQDRYENENNDVISTQTQQEQR.

The first 18 residues, 1–18, serve as a signal peptide directing secretion; that stretch reads MKGLFIRIVLAICLSLWA. Residues 19-266 form a non-LT domain region; that stretch reads IDMVFPWQQI…RIEEKYFNHL (248 aa). The interval 267 to 479 is LT domain; the sequence is NQFDYVDTRS…ISTQTQQEQR (213 aa). Residue E311 is part of the active site.

It in the N-terminal section; belongs to the bacterial solute-binding protein 3 family. In the C-terminal section; belongs to the transglycosylase Slt family.

Its subcellular location is the cell outer membrane. The enzyme catalyses Exolytic cleavage of the (1-&gt;4)-beta-glycosidic linkage between N-acetylmuramic acid (MurNAc) and N-acetylglucosamine (GlcNAc) residues in peptidoglycan, from either the reducing or the non-reducing ends of the peptidoglycan chains, with concomitant formation of a 1,6-anhydrobond in the MurNAc residue.. In terms of biological role, murein-degrading enzyme that degrades murein glycan strands and insoluble, high-molecular weight murein sacculi, with the concomitant formation of a 1,6-anhydromuramoyl product. Lytic transglycosylases (LTs) play an integral role in the metabolism of the peptidoglycan (PG) sacculus. Their lytic action creates space within the PG sacculus to allow for its expansion as well as for the insertion of various structures such as secretion systems and flagella. This Histophilus somni (strain 2336) (Haemophilus somnus) protein is Membrane-bound lytic murein transglycosylase F.